We begin with the raw amino-acid sequence, 628 residues long: 69 kDa protein (628 aa).

5 disordered regions span residues 1-25 (MSNG…SAPN), 141-332 (HFHA…FRPS), 347-398 (GHLE…HRRS), 418-507 (RGKI…RRTF), and 535-628 (QTVL…PDTD). Over residues 299-312 (PPTTTSRPTGPPSR) the composition is skewed to low complexity. Residues 320–331 (YQSSPHTPNFRP) are compositionally biased toward polar residues. A compositionally biased stretch (pro residues) spans 434–450 (GAPPPPRRLPSPAPHPQ). The span at 497–507 (TEVHAPERRTF) shows a compositional bias: basic and acidic residues.

This sequence belongs to the tymoviridae protein p69 family.

Acts as a suppressor of RNA-mediated gene silencing, also known as post-transcriptional gene silencing (PTGS), a mechanism of plant viral defense that limits the accumulation of viral RNAs. This is 69 kDa protein from Brassica.